A 298-amino-acid polypeptide reads, in one-letter code: MAHPEQHYLDLLAQVLARGDRRVDRTGVGTLSLFGAMLRFDLSKGAAPILTTKKVYWKTAVKEMLWFLTGGTNIRPLLQQNVRIWTDWPLAAYRRATGEEIGQAEFEARIVADEGFAARWGDLGPVYGKQWRRWLGPDGREHDQIAGLIETLRTNPASRRMLFHAWNVAEVGQMALPPCHMVYQYHVTSDGRLNALLYQRSVDLLLGAPFNFVGAAALQLMIAQQADLLPGELVWVGGDTHLYLNHLEQAREQISRAPRDWPRMQLVRRAESIDDYRIEDFAVEGYESHPAIAAEVAV.

DUMP contacts are provided by residues Arg-25 and 159 to 160; that span reads RR. Cys-179 acts as the Nucleophile in catalysis. DUMP-binding positions include 200-203, Asn-211, and 241-243; these read RSVD and HLY. Asp-203 is a binding site for (6R)-5,10-methylene-5,6,7,8-tetrahydrofolate. Residue Ala-297 participates in (6R)-5,10-methylene-5,6,7,8-tetrahydrofolate binding.

This sequence belongs to the thymidylate synthase family. Bacterial-type ThyA subfamily. Homodimer.

It localises to the cytoplasm. It carries out the reaction dUMP + (6R)-5,10-methylene-5,6,7,8-tetrahydrofolate = 7,8-dihydrofolate + dTMP. Its pathway is pyrimidine metabolism; dTTP biosynthesis. Catalyzes the reductive methylation of 2'-deoxyuridine-5'-monophosphate (dUMP) to 2'-deoxythymidine-5'-monophosphate (dTMP) while utilizing 5,10-methylenetetrahydrofolate (mTHF) as the methyl donor and reductant in the reaction, yielding dihydrofolate (DHF) as a by-product. This enzymatic reaction provides an intracellular de novo source of dTMP, an essential precursor for DNA biosynthesis. The chain is Thymidylate synthase from Cereibacter sphaeroides (strain ATCC 17025 / ATH 2.4.3) (Rhodobacter sphaeroides).